Reading from the N-terminus, the 620-residue chain is Glutathione-regulated potassium-efflux system protein KefC (620 aa).

Transmembrane regions (helical) follow at residues 4–24 (HTLI…PVAV), 26–46 (LGLG…PWGL), 54–74 (AILH…GLEL), 86–106 (VFGG…GFCV), 114–134 (VALL…MQAM), 149–169 (FAVL…IPLL), 178–198 (ASAF…VVLL), 218–238 (VFSA…EEAG), 271–291 (LLLG…TLVA), 296–316 (VLTL…LVAK), 326–346 (RWFA…FGAA), and 359–379 (ALTL…VLLT). The RCK N-terminal domain occupies 399-518 (QPRVIIAGFG…AGVAQPERET (120 aa)). The interval 596–620 (HGWQGTREGKHTGNDADEPEVKPQP) is disordered.

The protein belongs to the monovalent cation:proton antiporter 2 (CPA2) transporter (TC 2.A.37) family. KefC subfamily. In terms of assembly, homodimer. Interacts with the regulatory subunit KefF.

It localises to the cell inner membrane. Functionally, pore-forming subunit of a potassium efflux system that confers protection against electrophiles. Catalyzes K(+)/H(+) antiport. The polypeptide is Glutathione-regulated potassium-efflux system protein KefC (Cronobacter sakazakii (strain ATCC BAA-894) (Enterobacter sakazakii)).